The chain runs to 981 residues: Echinoderm microtubule-associated protein-like 4 (981 aa).

M1 is subject to N-acetylmethionine. Disordered regions lie at residues 1–20 (MDGFAGSLDDSISAASTSDV) and 57–205 (DHVA…PKLI). The tract at residues 1–249 (MDGFAGSLDD…IPSDVDNYDD (249 aa)) is microtubule-binding. Phosphoserine is present on residues S7, S13, S16, and S61. A coiled-coil region spans residues 14-63 (AASTSDVQDRLSALESRVQQQEDEITVLKAALADVLRRLAISEDHVASVK). T96 bears the Phosphothreonine mark. Residues 114-134 (GTEKKKEKPQGQREKKEESHS) show a composition bias toward basic and acidic residues. Residue S134 is modified to Phosphoserine; by NEK7. Over residues 137–155 (QSPQIRASPSPQPSSQPLQ) the composition is skewed to low complexity. At S144 the chain carries Phosphoserine; by NEK6. Residue S146 is modified to Phosphoserine; by NEK7. S171 is modified (phosphoserine). Over residues 176-193 (SPAEKSHNSWENSDDSRN) the composition is skewed to basic and acidic residues. S200 bears the Phosphoserine mark. T201 carries the phosphothreonine modification. At Y226 the chain carries Phosphotyrosine. T237 is modified (phosphothreonine). WD repeat units follow at residues 259–297 (LKLEWAYGYRGKDCRANVYLLPTGKIVYFIASVVVLFNY), 301–348 (TQRH…VWDS), 356–396 (IIGL…VWDW), 403–438 (AEIKTTNEVVLAVEFHPTDANTIITCGKSHIFFWTW), and 445–484 (RKQGIFGKYEKPKFVQCLAFLGNGDVLTGDSGGVMLIWSK). T490 is modified (phosphothreonine; by NEK6). WD repeat units follow at residues 500 to 538 (QISKQIKAHDGSVFTLCQMRNGMLLTGGGKDRKIILWDH), 543 to 579 (EREIEVPDQYGTIRAVAEGKADQFLVGTSRNFILRGT), 582 to 621 (DGFQIEVQGHTDELWGLATHPFKDLLLTCAQDRQVCLWNS), 625 to 662 (RLEWTRLVDEPGHCADFHPSGTVVAIGTHSGRWFVLDA), 668 to 704 (VSIHTDGNEQLSVMRYSIDGTFLAVGSHDNFIYLYVV), 711 to 750 (YSRYGRCTGHSSYITHLDWSPDNKYIMSNSGDYEILYWDI), 760 to 818 (RSDC…LFQY), and 825 to 864 (APSHKYSAHSSHVTNVSFTHNDSHLISTGGKDMSIIQWKL). T609 is subject to Phosphothreonine; by NEK6 and NEK7. Positions 881-893 (LTKAPVSSTESVI) are enriched in polar residues. Positions 881 to 981 (LTKAPVSSTE…EDQQDPSPSS (101 aa)) are disordered. Phosphoserine is present on residues S891 and S895. T897 and T899 each carry phosphothreonine. At S903 the chain carries Phosphoserine. The span at 916 to 931 (ISSSPTLLENSLEQTV) shows a compositional bias: polar residues. Acidic residues predominate over residues 937–946 (HSEEESEEGS). S978 bears the Phosphoserine mark. Phosphoserine; by NEK6 and NEK7 is present on S981.

The protein belongs to the WD repeat EMAP family. Homotrimer; self-association is mediated by the N-terminal coiled coil. Interacts (via WD repeats) with NUDC. Interacts with alpha- and beta-tubulin during mitosis. Phosphorylated during mitosis. Phosphorylation at Ser-144 and Ser-146 promotes its dissociation from microtubules during mitosis which is required for efficient chromosome congression.

It localises to the cytoplasm. Its subcellular location is the cytoskeleton. The protein resides in the spindle. It is found in the microtubule organizing center. The protein localises to the midbody. Its function is as follows. Essential for the formation and stability of microtubules (MTs). Required for the organization of the mitotic spindle and for the proper attachment of kinetochores to MTs. Promotes the recruitment of NUDC to the mitotic spindle for mitotic progression. This Homo sapiens (Human) protein is Echinoderm microtubule-associated protein-like 4 (EML4).